Reading from the N-terminus, the 142-residue chain is Hemoglobin subunit theta-1 (142 aa).

The Globin domain occupies 2–142 (ALSAEDRALV…VISALASEYR (141 aa)). His-59 and His-88 together coordinate heme b.

The protein belongs to the globin family.

In Pongo pygmaeus (Bornean orangutan), this protein is Hemoglobin subunit theta-1 (HBQ1).